Consider the following 276-residue polypeptide: Large ribosomal subunit protein uL2 (276 aa).

The disordered stretch occupies residues 218 to 276 (PYVRGSAMNPVDHPHGGGEGRAPIGRPAPSTPWGKPALGLKTRKKNKKSNKYIVRRRKK). Residues 258 to 276 (KTRKKNKKSNKYIVRRRKK) are compositionally biased toward basic residues.

It belongs to the universal ribosomal protein uL2 family. Part of the 50S ribosomal subunit. Forms a bridge to the 30S subunit in the 70S ribosome.

One of the primary rRNA binding proteins. Required for association of the 30S and 50S subunits to form the 70S ribosome, for tRNA binding and peptide bond formation. It has been suggested to have peptidyltransferase activity; this is somewhat controversial. Makes several contacts with the 16S rRNA in the 70S ribosome. The protein is Large ribosomal subunit protein uL2 of Finegoldia magna (strain ATCC 29328 / DSM 20472 / WAL 2508) (Peptostreptococcus magnus).